The primary structure comprises 127 residues: Small ribosomal subunit protein uS11 (127 aa).

Belongs to the universal ribosomal protein uS11 family. Part of the 30S ribosomal subunit. Interacts with proteins S7 and S18. Binds to IF-3.

Functionally, located on the platform of the 30S subunit, it bridges several disparate RNA helices of the 16S rRNA. Forms part of the Shine-Dalgarno cleft in the 70S ribosome. The polypeptide is Small ribosomal subunit protein uS11 (Rickettsia africae (strain ESF-5)).